The primary structure comprises 559 residues: Oxygen-dependent choline dehydrogenase (559 aa).

4–33 (DYIIIGAGSAGNVLATRLTEESDVSVLLLE) contacts FAD. Residues 182 to 201 (EGFGPMDRTVTPKGRRASTA) form a disordered region. The active-site Proton acceptor is the histidine 471.

It belongs to the GMC oxidoreductase family. It depends on FAD as a cofactor.

The catalysed reaction is choline + A = betaine aldehyde + AH2. It carries out the reaction betaine aldehyde + NAD(+) + H2O = glycine betaine + NADH + 2 H(+). The protein operates within amine and polyamine biosynthesis; betaine biosynthesis via choline pathway; betaine aldehyde from choline (cytochrome c reductase route): step 1/1. Its function is as follows. Involved in the biosynthesis of the osmoprotectant glycine betaine. Catalyzes the oxidation of choline to betaine aldehyde and betaine aldehyde to glycine betaine at the same rate. This is Oxygen-dependent choline dehydrogenase from Pectobacterium carotovorum subsp. carotovorum (strain PC1).